We begin with the raw amino-acid sequence, 879 residues long: Alanine--tRNA ligase (879 aa).

The Zn(2+) site is built by H566, H570, C668, and H672.

This sequence belongs to the class-II aminoacyl-tRNA synthetase family. Zn(2+) is required as a cofactor.

It is found in the cytoplasm. The catalysed reaction is tRNA(Ala) + L-alanine + ATP = L-alanyl-tRNA(Ala) + AMP + diphosphate. Catalyzes the attachment of alanine to tRNA(Ala) in a two-step reaction: alanine is first activated by ATP to form Ala-AMP and then transferred to the acceptor end of tRNA(Ala). Also edits incorrectly charged Ser-tRNA(Ala) and Gly-tRNA(Ala) via its editing domain. The polypeptide is Alanine--tRNA ligase (Clostridium perfringens (strain 13 / Type A)).